We begin with the raw amino-acid sequence, 262 residues long: Octanoyltransferase (262 aa).

The 192-residue stretch at 41–232 (PQLPDGLLLL…SFCQVFGLQA (192 aa)) folds into the BPL/LPL catalytic domain. Substrate is bound by residues 96–103 (RGGEVTYH), 163–165 (AIG), and 176–178 (GFA). The active-site Acyl-thioester intermediate is the Cys-194.

Belongs to the LipB family.

It is found in the cytoplasm. It catalyses the reaction octanoyl-[ACP] + L-lysyl-[protein] = N(6)-octanoyl-L-lysyl-[protein] + holo-[ACP] + H(+). It participates in protein modification; protein lipoylation via endogenous pathway; protein N(6)-(lipoyl)lysine from octanoyl-[acyl-carrier-protein]: step 1/2. Catalyzes the transfer of endogenously produced octanoic acid from octanoyl-acyl-carrier-protein onto the lipoyl domains of lipoate-dependent enzymes. Lipoyl-ACP can also act as a substrate although octanoyl-ACP is likely to be the physiological substrate. The sequence is that of Octanoyltransferase from Synechococcus sp. (strain JA-2-3B'a(2-13)) (Cyanobacteria bacterium Yellowstone B-Prime).